The following is a 95-amino-acid chain: Exodeoxyribonuclease 7 small subunit (95 aa).

A disordered region spans residues 65–95 (ETINPAETARPAKPENAPESPRMNDLFGTES).

This sequence belongs to the XseB family. As to quaternary structure, heterooligomer composed of large and small subunits.

It is found in the cytoplasm. The catalysed reaction is Exonucleolytic cleavage in either 5'- to 3'- or 3'- to 5'-direction to yield nucleoside 5'-phosphates.. Its function is as follows. Bidirectionally degrades single-stranded DNA into large acid-insoluble oligonucleotides, which are then degraded further into small acid-soluble oligonucleotides. The protein is Exodeoxyribonuclease 7 small subunit of Chlorobaculum tepidum (strain ATCC 49652 / DSM 12025 / NBRC 103806 / TLS) (Chlorobium tepidum).